A 708-amino-acid polypeptide reads, in one-letter code: ARF GTPase-activating protein GIT2 (708 aa).

Residues 1–124 form the Arf-GAP domain; sequence MSKRLRSSDV…AFVHRLPCRE (124 aa). Residues 11–34 form a C4-type zinc finger; that stretch reads CADCNGPDPSWASVNRGTFICDEC. 3 ANK repeats span residues 132 to 161, 166 to 195, and 199 to 228; these read DLSK…QANF, KGST…DPGT, and SGKT…ELTD. The disordered stretch occupies residues 376 to 592; it reads STQHSTESQD…SPTLPSTEDV (217 aa). A compositionally biased stretch (acidic residues) spans 384 to 401; the sequence is QDNDQPDYDSVASDEDTD. A phosphoserine mark is found at Ser393 and Ser396. Thr400 is modified (phosphothreonine). Over residues 407-438 the composition is skewed to polar residues; that stretch reads SKANRQKLQTLQSENSSLRRQATASACQVQTG. Positions 504-518 are enriched in low complexity; that stretch reads TSSSSLPSFPSTLSW. Phosphoserine occurs at positions 508, 511, and 519. A compositionally biased stretch (basic and acidic residues) spans 519-532; that stretch reads SRDESARRASRLEK. Thr536 carries the phosphothreonine modification. Ser563 carries the post-translational modification Phosphoserine.

As to quaternary structure, may form heterooligomers with GIT1. Directly interacts with protein Piccolo/PCLO. Interacts with PPFIA1 and PPFIA2. Interacts with ARHGEF7. Identified in a complex with ARHGEF6 and BIN2. Interacts with PAK3. Interacts with PXN/paxillin. Interacts with TGFB1I1. Forms a complex with EFNB1 and GRB4/NCK2. Tyrosine phosphorylated when coexpressed in cells with PTK2/FAK1 and SRC. Expressed in the brain (at protein level).

In terms of biological role, GTPase-activating protein for ADP ribosylation factor family members, including ARF1. The chain is ARF GTPase-activating protein GIT2 (Git2) from Mus musculus (Mouse).